The primary structure comprises 1107 residues: RNA-dependent RNA polymerase 1 (1107 aa).

The protein belongs to the RdRP family.

It catalyses the reaction RNA(n) + a ribonucleoside 5'-triphosphate = RNA(n+1) + diphosphate. In terms of biological role, RNA-dependent direct polymerase involved in antiviral silencing. Required for the production of some small RNAs (mainly 21 and some 22 nucleotides) derived from the crucifer-infecting tobamovirus (TMV-cg). Required for turnip mosaic virus (TuMV) silencing and accumulation of viral siRNAs. Involved in cucumber mosaic virus (CMV) silencing. Required for the biogenesis of viral secondary siRNAs, process that follows the production of primary siRNAs derived from viral RNA replication. Specifically targets the positive-strand of the 3 RNA genomes of CMV and preferentially amplifies the 5'-terminal siRNAs of each viral genomic RNA. Not involved in the production of siRNAs derived from a single-stranded 336-nucleotide satellite RNA of CMV. This Arabidopsis thaliana (Mouse-ear cress) protein is RNA-dependent RNA polymerase 1 (RDR1).